Consider the following 313-residue polypeptide: Olfactory receptor 5H1 (313 aa).

Residues 1–28 lie on the Extracellular side of the membrane; that stretch reads MEEENATLLTEFVLTGFLYQPQWKIPLF. Asparagine 5 carries an N-linked (GlcNAc...) asparagine glycan. Residues 29 to 49 traverse the membrane as a helical segment; it reads LAFLVIYLITIMGNLGLIAVI. The Cytoplasmic portion of the chain corresponds to 50 to 56; the sequence is WKDPHLH. The helical transmembrane segment at 57–77 threads the bilayer; it reads IPMYLLLGNLAFVDAWISSTV. At 78-98 the chain is on the extracellular side; that stretch reads TPKMLNNFLAKSKMISLSECK. Cysteine 97 and cysteine 179 form a disulfide bridge. The helical transmembrane segment at 99–119 threads the bilayer; sequence IQFFSFAISVTTECFLLATMA. The Cytoplasmic segment spans residues 120 to 143; it reads YDRYVAICKPLLYPAIMTNGLCIR. Residues 144–164 traverse the membrane as a helical segment; the sequence is LLILSYVGGILHALIHEGFLF. The Extracellular segment spans residues 165 to 195; it reads RLTFCNSNIVHHIYCDTIPLSKISCTDSSIN. A helical transmembrane segment spans residues 196 to 216; it reads FLMVFIFSGSIQVFSIVTILV. Residues 217-240 lie on the Cytoplasmic side of the membrane; sequence SYTFVLFAILKKKSDKGVRKAFST. Residues 241-261 traverse the membrane as a helical segment; the sequence is CGAHLFSVSLYYGPLLFIYVG. At 262–271 the chain is on the extracellular side; the sequence is PASPQADDQD. Residues 272–292 traverse the membrane as a helical segment; sequence MVEPLFYTVIIPLLNPIIYSL. Residues 293 to 313 are Cytoplasmic-facing; the sequence is RNKQVTVSFTKMLKKHVKVSY.

Belongs to the G-protein coupled receptor 1 family.

The protein localises to the cell membrane. Functionally, odorant receptor. The protein is Olfactory receptor 5H1 (OR5H1) of Homo sapiens (Human).